Consider the following 148-residue polypeptide: Large ribosomal subunit protein bL9 (148 aa).

Belongs to the bacterial ribosomal protein bL9 family.

Its function is as follows. Binds to the 23S rRNA. This Pseudomonas putida (strain ATCC 700007 / DSM 6899 / JCM 31910 / BCRC 17059 / LMG 24140 / F1) protein is Large ribosomal subunit protein bL9.